Consider the following 297-residue polypeptide: MNAPAPKPGLVIVDKPAGMTSHDVVSKLRRAFSTRKVGHAGTLDPMATGVLVVGIERGTRFLAHMVASTKAYDATIRLGAATSTDDAEGEVISTTDASGLDHRAILAEIANLTGDIMQKPTKVSAIKIDGKRAHERVRDGEEVDIPARPVTVSVFDVLDYRVDSEFYDLDVRVHCSSGTYIRALARDLGNALQVGGHLTALRRTEVGPFTLNDATPLSKLQENPELSLNLDQALTRSYPVLDITEDEGVDLSMGKWLEPRGLKGVHAAVTPSGKAVALIEEKGKRLATVFVAHPNTL.

The active-site Nucleophile is Asp-44.

This sequence belongs to the pseudouridine synthase TruB family. Type 1 subfamily.

The enzyme catalyses uridine(55) in tRNA = pseudouridine(55) in tRNA. Responsible for synthesis of pseudouridine from uracil-55 in the psi GC loop of transfer RNAs. In Corynebacterium glutamicum (strain R), this protein is tRNA pseudouridine synthase B.